We begin with the raw amino-acid sequence, 164 residues long: NADH-quinone oxidoreductase subunit I (164 aa).

4Fe-4S ferredoxin-type domains follow at residues 54-84 (LRRYPNGEERCIACKLCEAICPAQAITIEAG) and 95-124 (VRYDIDMVKCIYCGFCQEACPVDAIVEGPN). [4Fe-4S] cluster-binding residues include Cys-64, Cys-67, Cys-70, Cys-74, Cys-104, Cys-107, Cys-110, and Cys-114.

The protein belongs to the complex I 23 kDa subunit family. In terms of assembly, NDH-1 is composed of 14 different subunits. Subunits NuoA, H, J, K, L, M, N constitute the membrane sector of the complex. The cofactor is [4Fe-4S] cluster.

It is found in the cell inner membrane. It carries out the reaction a quinone + NADH + 5 H(+)(in) = a quinol + NAD(+) + 4 H(+)(out). Functionally, NDH-1 shuttles electrons from NADH, via FMN and iron-sulfur (Fe-S) centers, to quinones in the respiratory chain. The immediate electron acceptor for the enzyme in this species is believed to be ubiquinone. Couples the redox reaction to proton translocation (for every two electrons transferred, four hydrogen ions are translocated across the cytoplasmic membrane), and thus conserves the redox energy in a proton gradient. The sequence is that of NADH-quinone oxidoreductase subunit I from Mesorhizobium japonicum (strain LMG 29417 / CECT 9101 / MAFF 303099) (Mesorhizobium loti (strain MAFF 303099)).